Reading from the N-terminus, the 249-residue chain is Triosephosphate isomerase (249 aa).

The substrate site is built by asparagine 12 and lysine 14. Lysine 14 is subject to N6-acetyllysine. Tyrosine 68 bears the 3'-nitrotyrosine mark. Phosphoserine is present on serine 80. Residue histidine 96 is the Electrophile of the active site. A Phosphoserine modification is found at serine 106. Residue lysine 142 forms a Glycyl lysine isopeptide (Lys-Gly) (interchain with G-Cter in SUMO1) linkage. Lysine 149 is subject to N6-succinyllysine. Residue lysine 156 is modified to N6-acetyllysine; alternate. Lysine 156 carries the N6-succinyllysine; alternate modification. Serine 159 carries the phosphoserine modification. Glutamate 166 serves as the catalytic Proton acceptor. Threonine 173 is subject to Phosphothreonine. Lysine 194 is modified (N6-acetyllysine; alternate). Lysine 194 carries the post-translational modification N6-succinyllysine; alternate. Lysine 194 carries the post-translational modification N6-methyllysine; alternate. A Phosphoserine modification is found at serine 198. Tyrosine 209 bears the 3'-nitrotyrosine mark. Position 212 is a phosphoserine (serine 212). Threonine 214 bears the Phosphothreonine mark. Position 223 is a phosphoserine (serine 223). Lysine 238 carries the N6-acetyllysine modification.

The protein belongs to the triosephosphate isomerase family. In terms of assembly, homodimer.

The protein localises to the cytoplasm. It carries out the reaction dihydroxyacetone phosphate = methylglyoxal + phosphate. It catalyses the reaction D-glyceraldehyde 3-phosphate = dihydroxyacetone phosphate. The protein operates within carbohydrate degradation; glycolysis; D-glyceraldehyde 3-phosphate from glycerone phosphate: step 1/1. It functions in the pathway carbohydrate biosynthesis; gluconeogenesis. Its function is as follows. Triosephosphate isomerase is an extremely efficient metabolic enzyme that catalyzes the interconversion between dihydroxyacetone phosphate (DHAP) and D-glyceraldehyde-3-phosphate (G3P) in glycolysis and gluconeogenesis. Functionally, it is also responsible for the non-negligible production of methylglyoxal a reactive cytotoxic side-product that modifies and can alter proteins, DNA and lipids. This Pongo abelii (Sumatran orangutan) protein is Triosephosphate isomerase (TPI1).